The following is a 76-amino-acid chain: Small ribosomal subunit protein bS18 (76 aa).

Belongs to the bacterial ribosomal protein bS18 family. Part of the 30S ribosomal subunit. Forms a tight heterodimer with protein bS6.

Its function is as follows. Binds as a heterodimer with protein bS6 to the central domain of the 16S rRNA, where it helps stabilize the platform of the 30S subunit. This Marinobacter nauticus (strain ATCC 700491 / DSM 11845 / VT8) (Marinobacter aquaeolei) protein is Small ribosomal subunit protein bS18.